We begin with the raw amino-acid sequence, 82 residues long: ATP synthase subunit c, chloroplastic (82 aa).

The next 2 membrane-spanning stretches (helical) occupy residues Ile-4–Pro-24 and Leu-57–Ala-77.

It belongs to the ATPase C chain family. F-type ATPases have 2 components, F(1) - the catalytic core - and F(0) - the membrane proton channel. F(1) has five subunits: alpha(3), beta(3), gamma(1), delta(1), epsilon(1). F(0) has four main subunits: a(1), b(1), b'(1) and c(10-14). The alpha and beta chains form an alternating ring which encloses part of the gamma chain. F(1) is attached to F(0) by a central stalk formed by the gamma and epsilon chains, while a peripheral stalk is formed by the delta, b and b' chains.

It localises to the plastid. The protein resides in the chloroplast thylakoid membrane. Its function is as follows. F(1)F(0) ATP synthase produces ATP from ADP in the presence of a proton or sodium gradient. F-type ATPases consist of two structural domains, F(1) containing the extramembraneous catalytic core and F(0) containing the membrane proton channel, linked together by a central stalk and a peripheral stalk. During catalysis, ATP synthesis in the catalytic domain of F(1) is coupled via a rotary mechanism of the central stalk subunits to proton translocation. Key component of the F(0) channel; it plays a direct role in translocation across the membrane. A homomeric c-ring of between 10-14 subunits forms the central stalk rotor element with the F(1) delta and epsilon subunits. The polypeptide is ATP synthase subunit c, chloroplastic (Thalassiosira pseudonana (Marine diatom)).